A 304-amino-acid chain; its full sequence is Acetaldehyde dehydrogenase 2 (304 aa).

Catalysis depends on Cys131, which acts as the Acyl-thioester intermediate. NAD(+) is bound by residues 162–170 (SAGPGTRKN) and Asn273.

This sequence belongs to the acetaldehyde dehydrogenase family.

The enzyme catalyses acetaldehyde + NAD(+) + CoA = acetyl-CoA + NADH + H(+). In Dechloromonas aromatica (strain RCB), this protein is Acetaldehyde dehydrogenase 2.